Here is an 818-residue protein sequence, read N- to C-terminus: MESEQLFHRGYYRNSYNSITSASSDEELLDGAGVIMDFQTSEDDNLLDGDTAVGTHYTMTNGGSINSSTHLLDLLDEPIPGVGTYDDFHTIDWVREKCKDRERHRRINSKKKESAWEMTKSLYDAWSGWLVVTLTGLASGALAGLIDIAADWMTDLKEGICLSALWYNHEQCCWGSNETTFEERDKCPQWKTWAELIIGQAEGPGSYIMNYIMYIFWALSFAFLAVSLVKVFAPYACGSGIPEIKTILSGFIIRGYLGKWTLMIKTITLVLAVASGLSLGKEGPLVHVACCCGNIFSYLFPKYSTNEAKKREVLSAASAAGVSVAFGAPIGGVLFSLEEVSYYFPLKTLWRSFFAALVAAFVLRSINPFGNSRLVLFYVEYHTPWYLFELFPFILLGVFGGLWGAFFIRANIAWCRRRKSTKFGKYPVLEVIIVAAITAVIAFPNPYTRLNTSELIKELFTDCGPLESSSLCDYRNDMNASKIVDDIPDRPAGIGVYSAIWQLCLALIFKIIMTVFTFGIKVPSGLFIPSMAIGAIAGRIVGIAVEQLAYYHHDWFIFKEWCEVGADCITPGLYAMVGAAACLGGVTRMTVSLVVIVFELTGGLEYIVPLMAAVMTSKWVGDAFGREGIYEAHIRLNGYPFLDAKEEFTHTTLAADVMRPRRNDPPLAVLTQDNMTVDDIENMINETSYNGFPVIMSKESQRLVGFALRRDLTIAIESARKKQEGIVGSSRVCFAQHTPSLPAESPRPLKLRSILDMSPFTVTDHTPMEIVVDIFRKLGLRQCLVTHNGRLLGIITKKDILRHMAQTANQDPASIMFN.

At 1-125 (MESEQLFHRG…WEMTKSLYDA (125 aa)) the chain is on the cytoplasmic side. Short sequence motifs (di-leucine internalization motif; mediates targeting to late endosome and lysosome membranes) lie at residues 28–29 (LL), 46–47 (LL), and 71–75 (LLDLL). The chain crosses the membrane as a helical span at residues 126–163 (WSGWLVVTLTGLASGALAGLIDIAADWMTDLKEGICLS). A glycan (N-linked (GlcNAc...) asparagine) is linked at Asn-177. The helical transmembrane segment at 209–232 (MNYIMYIFWALSFAFLAVSLVKVF) threads the bilayer. A Selectivity filter part_1 motif is present at residues 238-242 (GSGIP). Ser-239 lines the chloride pocket. The segment at residues 241 to 248 (IPEIKTIL) is an intramembrane region (helical). Helical transmembrane passes span 258–276 (GKWT…VASG) and 282–301 (EGPL…YLFP). Positions 280–284 (GKEGP) match the Selectivity filter part_2 motif. 2 consecutive intramembrane regions (helical) follow at residues 313–325 (VLSA…VSVA) and 329–337 (PIGGVLFSL). The next 3 helical transmembrane spans lie at 349 to 367 (LWRS…RSIN), 391 to 416 (FPFI…AWCR), and 423 to 443 (FGKY…VIAF). 2 N-linked (GlcNAc...) asparagine glycosylation sites follow: Asn-451 and Asn-479. 2 helical membrane passes run 500-520 (IWQL…TFGI) and 525-544 (GLFI…VGIA). A Selectivity filter part_3 motif is present at residues 525–529 (GLFIP). Chloride is bound at residue Phe-527. 2 intramembrane regions (helical) span residues 572–586 (GLYA…LGGV) and 590–601 (TVSLVVIVFELT). An intramembrane region (note=Loop between two helices) is located at residues 602–605 (GGLE). The helical transmembrane segment at 606–624 (YIVPLMAAVMTSKWVGDAF) threads the bilayer. Topologically, residues 625 to 818 (GREGIYEAHI…NQDPASIMFN (194 aa)) are cytoplasmic. Tyr-630 provides a ligand contact to chloride. 2 consecutive CBS domains span residues 658-722 (MRPR…ARKK) and 755-812 (LDMS…NQDP). ATP contacts are provided by residues 689–691 (YNG) and 796–799 (TKKD).

This sequence belongs to the chloride channel (TC 2.A.49) family. ClC-3/CLCN3 subfamily. In terms of assembly, monomer and homodimer. Forms heterodimers with CLCN4. Interacts with GOPC, PDZK1 and NHERF1/EBP50. In terms of processing, N-glycosylated. In terms of tissue distribution, expressed primarily in tissues derived from neuroectoderm. Within the brain, its expression is particularly evident in the hippocampus, olfactory cortex, and olfactory bulb. Highly expressed in aortic and coronary vascular smooth muscle cells, and aortic endothelial cells. Also expressed in tracheal and alveolar epithelial cells, and intima and media of the pulmonary vessels. Expressed in bronchus and colon (at protein level).

Its subcellular location is the early endosome membrane. It localises to the late endosome membrane. The protein resides in the lysosome membrane. It is found in the cell membrane. The protein localises to the golgi apparatus membrane. Its subcellular location is the cell projection. It localises to the ruffle membrane. Its function is as follows. Strongly outwardly rectifying, electrogenic H(+)/Cl(-)exchanger which mediates the exchange of chloride ions against protons. The CLC channel family contains both chloride channels and proton-coupled anion transporters that exchange chloride or another anion for protons. The presence of conserved gating glutamate residues is typical for family members that function as antiporters. Functionally, strongly outwardly rectifying, electrogenic H(+)/Cl(-)exchanger which mediates the exchange of chloride ions against protons. The polypeptide is H(+)/Cl(-) exchange transporter 3 (CLCN3) (Homo sapiens (Human)).